A 107-amino-acid chain; its full sequence is NADH-quinone oxidoreductase subunit K (107 aa).

3 helical membrane-spanning segments follow: residues 9–29 (IGVN…MFAV), 36–56 (IVIL…FLTF), and 68–88 (FSLF…AIVI).

The protein belongs to the complex I subunit 4L family. NDH-1 is composed of 14 different subunits. Subunits NuoA, H, J, K, L, M, N constitute the membrane sector of the complex.

It localises to the cell inner membrane. It carries out the reaction a quinone + NADH + 5 H(+)(in) = a quinol + NAD(+) + 4 H(+)(out). Its function is as follows. NDH-1 shuttles electrons from NADH, via FMN and iron-sulfur (Fe-S) centers, to quinones in the respiratory chain. The immediate electron acceptor for the enzyme in this species is believed to be a menaquinone. Couples the redox reaction to proton translocation (for every two electrons transferred, four hydrogen ions are translocated across the cytoplasmic membrane), and thus conserves the redox energy in a proton gradient. This chain is NADH-quinone oxidoreductase subunit K, found in Chlorobaculum tepidum (strain ATCC 49652 / DSM 12025 / NBRC 103806 / TLS) (Chlorobium tepidum).